The following is a 762-amino-acid chain: Polyadenylate-binding protein, cytoplasmic and nuclear (762 aa).

The segment at 39–58 (TGEEIDTAGPTPSSAAPHPQ) is disordered. A compositionally biased stretch (low complexity) spans 48–58 (PTPSSAAPHPQ). RRM domains follow at residues 61–139 (ASLY…WSQR), 149–226 (GNVF…HHIP), 242–320 (TNIY…RAQK), and 346–470 (VNLY…LAQR). 3 disordered regions span residues 376-429 (KVMR…KSKL), 596-663 (SALA…AGAP), and 740-762 (VRQQGDGEGAQAPSKEEKTEEKA). The span at 389-425 (GESKEGEESEKNKENKPEEKEGDDSKPEEKEGEDSKS) shows a compositional bias: basic and acidic residues. A compositionally biased stretch (gly residues) spans 600-612 (GGRGGPAGRGPMQ). Residues 645–663 (AAGRAPAGAPAGARGAGAP) are compositionally biased toward low complexity. The PABC domain maps to 664 to 741 (EGLQGQLAAV…ALAVYDDYVR (78 aa)). The segment covering 753–762 (SKEEKTEEKA) has biased composition (basic and acidic residues).

This sequence belongs to the polyadenylate-binding protein type-1 family.

The protein resides in the cytoplasm. The protein localises to the nucleus. Its function is as follows. Binds the poly(A) tail of mRNA. Appears to be an important mediator of the multiple roles of the poly(A) tail in mRNA biogenesis, stability and translation. In the nucleus, involved in both mRNA cleavage and polyadenylation. Is also required for efficient mRNA export to the cytoplasm. Acts in concert with a poly(A)-specific nuclease (PAN) to affect poly(A) tail shortening, which may occur concomitantly with either nucleocytoplasmic mRNA transport or translational initiation. In the cytoplasm, stimulates translation initiation and regulates mRNA decay through translation termination-coupled poly(A) shortening, probably mediated by PAN. This is Polyadenylate-binding protein, cytoplasmic and nuclear (PAB1) from Pyricularia oryzae (strain 70-15 / ATCC MYA-4617 / FGSC 8958) (Rice blast fungus).